Consider the following 127-residue polypeptide: Protein ApaG (127 aa).

The ApaG domain occupies 3-127 (EGKKYEIAVK…FILSVPRILH (125 aa)).

This chain is Protein ApaG, found in Nitrosospira multiformis (strain ATCC 25196 / NCIMB 11849 / C 71).